The sequence spans 345 residues: tRNA-specific 2-thiouridylase MnmA (345 aa).

Residues 6–13 and leucine 32 contribute to the ATP site; that span reads AMSGGVDS. Catalysis depends on cysteine 100, which acts as the Nucleophile. Residues cysteine 100 and cysteine 197 are joined by a disulfide bond. Glycine 124 provides a ligand contact to ATP. Positions 146–148 are interaction with tRNA; sequence RDQ. Cysteine 197 serves as the catalytic Cysteine persulfide intermediate.

This sequence belongs to the MnmA/TRMU family.

It localises to the cytoplasm. The enzyme catalyses S-sulfanyl-L-cysteinyl-[protein] + uridine(34) in tRNA + AH2 + ATP = 2-thiouridine(34) in tRNA + L-cysteinyl-[protein] + A + AMP + diphosphate + H(+). Functionally, catalyzes the 2-thiolation of uridine at the wobble position (U34) of tRNA, leading to the formation of s(2)U34. This chain is tRNA-specific 2-thiouridylase MnmA, found in Acidiphilium cryptum (strain JF-5).